A 179-amino-acid chain; its full sequence is Ribosome maturation factor RimM (179 aa).

Residues 100–176 (KEEFHLLELI…FLIINPPNGL (77 aa)) form the PRC barrel domain.

It belongs to the RimM family. As to quaternary structure, binds ribosomal protein uS19.

It localises to the cytoplasm. An accessory protein needed during the final step in the assembly of 30S ribosomal subunit, possibly for assembly of the head region. Essential for efficient processing of 16S rRNA. May be needed both before and after RbfA during the maturation of 16S rRNA. It has affinity for free ribosomal 30S subunits but not for 70S ribosomes. The sequence is that of Ribosome maturation factor RimM from Prochlorococcus marinus (strain MIT 9312).